The following is a 327-amino-acid chain: AA9 family lytic polysaccharide monooxygenase G (327 aa).

The signal sequence occupies residues 1–20 (MKLNLASLCFLASIAPLVSG). Positions 21 and 96 each coordinate Cu(2+). The cysteines at positions 62 and 185 are disulfide-linked. His172 lines the O2 pocket. A Cu(2+)-binding site is contributed by Tyr182. Asn290 is a glycosylation site (N-linked (GlcNAc...) asparagine). Positions 291–327 (GTIKKYYQCGGQGWTGSGSCEAGTSCREWNTWYFQCV) constitute a CBM1 domain.

This sequence belongs to the polysaccharide monooxygenase AA9 family. The cofactor is Cu(2+).

It localises to the secreted. It catalyses the reaction [(1-&gt;4)-beta-D-glucosyl]n+m + reduced acceptor + O2 = 4-dehydro-beta-D-glucosyl-[(1-&gt;4)-beta-D-glucosyl]n-1 + [(1-&gt;4)-beta-D-glucosyl]m + acceptor + H2O.. Functionally, lytic polysaccharide monooxygenase (LPMO) that depolymerizes crystalline and amorphous polysaccharides via the oxidation of scissile alpha- or beta-(1-4)-glycosidic bonds, yielding C1 or C4 oxidation products. Catalysis by LPMOs requires the reduction of the active-site copper from Cu(II) to Cu(I) by a reducing agent and H(2)O(2) or O(2) as a cosubstrate. The sequence is that of AA9 family lytic polysaccharide monooxygenase G from Aspergillus tamarii.